Here is a 269-residue protein sequence, read N- to C-terminus: Protein tsct-1 (269 aa).

Belongs to the TSC-22/Dip/Bun family.

The polypeptide is Protein tsct-1 (Caenorhabditis elegans).